A 342-amino-acid polypeptide reads, in one-letter code: Thiosulfate/3-mercaptopyruvate sulfurtransferase 2 (342 aa).

Rhodanese domains lie at 56–173 and 224–338; these read GDAD…DVES and EDKT…LPIV. Catalysis depends on Cys-298, which acts as the Cysteine persulfide intermediate.

In terms of tissue distribution, expressed in roots, rosette and cauline leaves, stems, flowers and siliques.

Its subcellular location is the cytoplasm. The enzyme catalyses thiosulfate + hydrogen cyanide = thiocyanate + sulfite + 2 H(+). It catalyses the reaction 2-oxo-3-sulfanylpropanoate + [thioredoxin]-dithiol = [thioredoxin]-disulfide + hydrogen sulfide + pyruvate + H(+). Catalyzes the transfer of a sulfur ion from a donor to cyanide or to other thiol compounds. Substrate preference is 3-mercaptopyruvate &gt; thiosulfate. Involved in embryo and seed development. The sequence is that of Thiosulfate/3-mercaptopyruvate sulfurtransferase 2 (STR2) from Arabidopsis thaliana (Mouse-ear cress).